We begin with the raw amino-acid sequence, 129 residues long: uncharacterized protein (129 aa).

The protein belongs to the asfivirus C129R family.

It localises to the virion. Plays a role in the inhibition of type I interferon signaling pathway. Mechanistically, specifically interacts with 2',3'-cGAMP and cleaves it via its phosphodiesterase activity. In turn, prevents 2',3'-cGAMP interaction with host ER-resident STING1 leading to inhibition of downstream signaling pathway and type I interferon production. This is an uncharacterized protein from African swine fever virus (isolate Pig/Kenya/KEN-50/1950) (ASFV).